The chain runs to 129 residues: Small ribosomal subunit protein uS11 (129 aa).

This sequence belongs to the universal ribosomal protein uS11 family. As to quaternary structure, part of the 30S ribosomal subunit. Interacts with proteins S7 and S18. Binds to IF-3.

In terms of biological role, located on the platform of the 30S subunit, it bridges several disparate RNA helices of the 16S rRNA. Forms part of the Shine-Dalgarno cleft in the 70S ribosome. The chain is Small ribosomal subunit protein uS11 from Oceanobacillus iheyensis (strain DSM 14371 / CIP 107618 / JCM 11309 / KCTC 3954 / HTE831).